Here is a 297-residue protein sequence, read N- to C-terminus: 4-hydroxy-tetrahydrodipicolinate synthase (297 aa).

T55 contacts pyruvate. Y144 (proton donor/acceptor) is an active-site residue. K172 serves as the catalytic Schiff-base intermediate with substrate. I213 contributes to the pyruvate binding site.

The protein belongs to the DapA family. Homotetramer; dimer of dimers.

It is found in the cytoplasm. It catalyses the reaction L-aspartate 4-semialdehyde + pyruvate = (2S,4S)-4-hydroxy-2,3,4,5-tetrahydrodipicolinate + H2O + H(+). Its pathway is amino-acid biosynthesis; L-lysine biosynthesis via DAP pathway; (S)-tetrahydrodipicolinate from L-aspartate: step 3/4. Its function is as follows. Catalyzes the condensation of (S)-aspartate-beta-semialdehyde [(S)-ASA] and pyruvate to 4-hydroxy-tetrahydrodipicolinate (HTPA). The polypeptide is 4-hydroxy-tetrahydrodipicolinate synthase (Lactococcus lactis subsp. cremoris (strain MG1363)).